The following is a 363-amino-acid chain: GTPase Obg (363 aa).

In terms of domain architecture, Obg spans 1-159 (MKFIDEAKIY…LELRLELRVL (159 aa)). The OBG-type G domain occupies 160 to 338 (ADVGLLGLPN…LIYAISEALE (179 aa)). Residues 166-173 (GLPNAGKS), 191-195 (FTTLH), 213-216 (DVPG), 284-287 (NKLD), and 319-321 (AAI) contribute to the GTP site. Mg(2+) contacts are provided by Ser173 and Thr193. The segment at 342–363 (RPEIGDLDDNDEDSDEIIRDTE) is disordered. The segment covering 346–356 (GDLDDNDEDSD) has biased composition (acidic residues).

Belongs to the TRAFAC class OBG-HflX-like GTPase superfamily. OBG GTPase family. Monomer. Mg(2+) is required as a cofactor.

The protein resides in the cytoplasm. In terms of biological role, an essential GTPase which binds GTP, GDP and possibly (p)ppGpp with moderate affinity, with high nucleotide exchange rates and a fairly low GTP hydrolysis rate. Plays a role in control of the cell cycle, stress response, ribosome biogenesis and in those bacteria that undergo differentiation, in morphogenesis control. This is GTPase Obg from Dechloromonas aromatica (strain RCB).